The primary structure comprises 72 residues: NAD(P)H-quinone oxidoreductase subunit O (72 aa).

It belongs to the complex I NdhO subunit family. NDH-1 can be composed of about 15 different subunits; different subcomplexes with different compositions have been identified which probably have different functions.

It localises to the cellular thylakoid membrane. The enzyme catalyses a plastoquinone + NADH + (n+1) H(+)(in) = a plastoquinol + NAD(+) + n H(+)(out). The catalysed reaction is a plastoquinone + NADPH + (n+1) H(+)(in) = a plastoquinol + NADP(+) + n H(+)(out). In terms of biological role, NDH-1 shuttles electrons from an unknown electron donor, via FMN and iron-sulfur (Fe-S) centers, to quinones in the respiratory and/or the photosynthetic chain. The immediate electron acceptor for the enzyme in this species is believed to be plastoquinone. Couples the redox reaction to proton translocation, and thus conserves the redox energy in a proton gradient. Cyanobacterial NDH-1 also plays a role in inorganic carbon-concentration. The protein is NAD(P)H-quinone oxidoreductase subunit O of Trichodesmium erythraeum (strain IMS101).